The following is a 312-amino-acid chain: uncharacterized protein (312 aa).

8 consecutive transmembrane segments (helical) span residues 4-24 (IFLA…KVIF), 45-65 (LITP…PLVL), 75-95 (IAGI…AVML), 117-137 (VILA…NLIW), 171-191 (GLGV…IQFL), 217-237 (TSMT…GVMI), 253-275 (AFIF…PLGI), and 280-299 (LLLI…AHTW).

The protein localises to the cell membrane. This is an uncharacterized protein from Bacillus subtilis (strain 168).